A 162-amino-acid chain; its full sequence is NADH-quinone oxidoreductase subunit I (162 aa).

4Fe-4S ferredoxin-type domains are found at residues 52-82 (LRRYPNGEERCIACKLCEAICPAQAITIEAG) and 93-122 (TRYDIDMVKCIYCGMCQEACPVDAIVEGPN). [4Fe-4S] cluster is bound by residues Cys62, Cys65, Cys68, Cys72, Cys102, Cys105, Cys108, and Cys112.

The protein belongs to the complex I 23 kDa subunit family. In terms of assembly, NDH-1 is composed of 14 different subunits. Subunits NuoA, H, J, K, L, M, N constitute the membrane sector of the complex. [4Fe-4S] cluster serves as cofactor.

It localises to the cell inner membrane. It carries out the reaction a quinone + NADH + 5 H(+)(in) = a quinol + NAD(+) + 4 H(+)(out). Functionally, NDH-1 shuttles electrons from NADH, via FMN and iron-sulfur (Fe-S) centers, to quinones in the respiratory chain. The immediate electron acceptor for the enzyme in this species is believed to be ubiquinone. Couples the redox reaction to proton translocation (for every two electrons transferred, four hydrogen ions are translocated across the cytoplasmic membrane), and thus conserves the redox energy in a proton gradient. This Methylorubrum populi (strain ATCC BAA-705 / NCIMB 13946 / BJ001) (Methylobacterium populi) protein is NADH-quinone oxidoreductase subunit I.